We begin with the raw amino-acid sequence, 90 residues long: Large ribosomal subunit protein bL27 (90 aa).

Positions 1–13 (MATKKSGGSSSNG) are enriched in low complexity. The segment at 1-20 (MATKKSGGSSSNGRDSRGRR) is disordered.

Belongs to the bacterial ribosomal protein bL27 family.

The polypeptide is Large ribosomal subunit protein bL27 (Anaplasma marginale (strain Florida)).